A 283-amino-acid polypeptide reads, in one-letter code: Light-independent protochlorophyllide reductase iron-sulfur ATP-binding protein (283 aa).

ATP contacts are provided by residues 15–20 and lysine 44; that span reads GIGKST. Serine 19 contributes to the Mg(2+) binding site. [4Fe-4S] cluster contacts are provided by cysteine 100 and cysteine 134. 185–186 lines the ATP pocket; it reads NR.

It belongs to the NifH/BchL/ChlL family. Homodimer. Protochlorophyllide reductase is composed of three subunits; ChlL, ChlN and ChlB. Requires [4Fe-4S] cluster as cofactor.

It carries out the reaction chlorophyllide a + oxidized 2[4Fe-4S]-[ferredoxin] + 2 ADP + 2 phosphate = protochlorophyllide a + reduced 2[4Fe-4S]-[ferredoxin] + 2 ATP + 2 H2O. The protein operates within porphyrin-containing compound metabolism; chlorophyll biosynthesis (light-independent). Component of the dark-operative protochlorophyllide reductase (DPOR) that uses Mg-ATP and reduced ferredoxin to reduce ring D of protochlorophyllide (Pchlide) to form chlorophyllide a (Chlide). This reaction is light-independent. The L component serves as a unique electron donor to the NB-component of the complex, and binds Mg-ATP. The sequence is that of Light-independent protochlorophyllide reductase iron-sulfur ATP-binding protein from Synechococcus sp. (strain JA-3-3Ab) (Cyanobacteria bacterium Yellowstone A-Prime).